The sequence spans 392 residues: Na(+)/H(+) antiporter NhaA (392 aa).

Transmembrane regions (helical) follow at residues 16-36 (ILLIIVTVLALILQNSFLSAA), 58-78 (LLLWVNDGLMAIFFFLIGLEV), 93-113 (ITLPGIAAVGGMIVPALIFIL), 124-144 (GWAIPTATDIAFALGILSLLG), 153-173 (IFLMALSIIDDLGAIVIIALF), 176-196 (TDLSTLSITVAAISLAILFIM), 199-219 (MDVAIKSAYIVIGIILWVSVL), 257-277 (DLHYWVAFLILPLFAFVNAGV), 295-315 (VMLGLFVGKQAGVFGFSWLAI), 328-348 (WMMLYGVSVLTGIGFTMSLFV), and 362-382 (ADKLAILLGSFLSAATGYLIL).

Belongs to the NhaA Na(+)/H(+) (TC 2.A.33) antiporter family.

It is found in the cell inner membrane. It catalyses the reaction Na(+)(in) + 2 H(+)(out) = Na(+)(out) + 2 H(+)(in). In terms of biological role, na(+)/H(+) antiporter that extrudes sodium in exchange for external protons. The protein is Na(+)/H(+) antiporter NhaA of Sulfurovum sp. (strain NBC37-1).